Here is a 395-residue protein sequence, read N- to C-terminus: Bone morphogenetic protein 2 (395 aa).

An N-terminal signal peptide occupies residues 1–23; the sequence is MVAGTRCLLALLLPQVLLGGAAG. Positions 24 to 281 are cleaved as a propeptide — cleaved by PCSK5; sequence LIPELGRRKF…GHPLHRREKR (258 aa). Residue Ser-86 is modified to Phosphoserine. N-linked (GlcNAc...) asparagine glycans are attached at residues Asn-134 and Asn-199. The interval 270–292 is disordered; sequence GKGHPLHRREKRQAKHKQRKRLK. Basic residues predominate over residues 273–292; sequence HPLHRREKRQAKHKQRKRLK. Cystine bridges form between Cys-295/Cys-360, Cys-324/Cys-392, and Cys-328/Cys-394. N-linked (GlcNAc...) asparagine glycosylation occurs at Asn-337.

It belongs to the TGF-beta family. In terms of assembly, homodimer; disulfide-linked. Interacts with SOSTDC1. Interacts with GREM2, RGMA, RGMB and RGMC. Interacts with ASPN. Interacts with MAFP5. Interacts with FBN1 (via N-terminal domain) and FBN2. Interacts with type I receptor BMPR1A. Interacts with type II receptor BMPR2. Interacts with SCUBE3. Interacts with TNFAIP6 (primarily via Link domain); this interaction is inhibited by hyaluronan. Interacts with ERFE. Interacts with BMPR1A/ALK3; the interaction may induce HAMP expression. Forms heterodimers with BMP6 in vitro; the heterodimer then binds to its receptor BMPR1A /ALK3 and may induce HAMP expression. Interacts with TGFBR3.

The protein resides in the secreted. Functionally, growth factor of the TGF-beta superfamily that plays essential roles in many developmental processes, including cardiogenesis, neurogenesis, and osteogenesis. Induces cartilage and bone formation. Initiates the canonical BMP signaling cascade by associating with type I receptor BMPR1A and type II receptor BMPR2. Once all three components are bound together in a complex at the cell surface, BMPR2 phosphorylates and activates BMPR1A. In turn, BMPR1A propagates signal by phosphorylating SMAD1/5/8 that travel to the nucleus and act as activators and repressors of transcription of target genes. Also acts to promote expression of HAMP, via the interaction with its receptor BMPR1A/ALK3. Can also signal through non-canonical pathways such as ERK/MAP kinase signaling cascade that regulates osteoblast differentiation. Also stimulates the differentiation of myoblasts into osteoblasts via the EIF2AK3-EIF2A-ATF4 pathway by stimulating EIF2A phosphorylation which leads to increased expression of ATF4 which plays a central role in osteoblast differentiation. Acts as a positive regulator of odontoblast differentiation during mesenchymal tooth germ formation, expression is repressed during the bell stage by MSX1-mediated inhibition of CTNNB1 signaling. This is Bone morphogenetic protein 2 (BMP2) from Oryctolagus cuniculus (Rabbit).